Here is a 354-residue protein sequence, read N- to C-terminus: MASAQVPFSFPLAHFLIFVFVTSTITHLQQRIVKLQPLSEKELPMTTQMSSGNTESPEMRRDSEQHGNGELRGMFTINSIGRLGNQMGEYATLFALARMNGRLAFIPASMHNALAPIFRISLPVLHSDTAKKIPWQNYHLNDWMEERYRHIPGHFVRFTGYPCSWTFYHHLRPEILKEFTLHDHVREEAQAFLRGLRVNGSQPSTFVGVHVRRGDYVHVMPNVWKGVVADRGYLEKALDMFRARYSSPVFVVTSNGMAWCRENINASRGDVVFAGNGIEGSPAKDFALLTQCNHTIMTIGTFGIWAAYLAGGDTIYLANYTLPDSPFLKVFKPEAAFLPEWVGIPADLSPLLKH.

Over 1–5 the chain is Cytoplasmic; that stretch reads MASAQ. The helical; Signal-anchor for type II membrane protein transmembrane segment at 6 to 26 threads the bilayer; the sequence is VPFSFPLAHFLIFVFVTSTIT. Residues 27 to 354 are Lumenal-facing; sequence HLQQRIVKLQ…PADLSPLLKH (328 aa). Positions 43-68 are disordered; sequence LPMTTQMSSGNTESPEMRRDSEQHGN. Residues 45–56 are compositionally biased toward polar residues; sequence MTTQMSSGNTES. A compositionally biased stretch (basic and acidic residues) spans 57-68; that stretch reads PEMRRDSEQHGN. A glycan (N-linked (GlcNAc...) asparagine) is linked at Asn-199.

It belongs to the glycosyltransferase 11 family. Specifically expressed in gut.

The protein localises to the golgi apparatus. The protein resides in the golgi stack membrane. The catalysed reaction is a beta-D-galactosyl-(1-&gt;3)-N-acetyl-beta-D-glucosaminyl derivative + GDP-beta-L-fucose = an alpha-L-Fuc-(1-&gt;2)-beta-D-Gal-(1-&gt;3)-beta-D-GlcNAc derivative + GDP + H(+). It carries out the reaction a beta-D-galactosyl-(1-&gt;4)-N-acetyl-beta-D-glucosaminyl derivative + GDP-beta-L-fucose = an alpha-L-Fuc-(1-&gt;2)-beta-D-Gal-(1-&gt;4)-beta-D-GlcNAc derivative + GDP + H(+). The enzyme catalyses a ganglioside GM1 (d18:1(4E)) + GDP-beta-L-fucose = a ganglioside Fuc-GM1 (d18:1(4E)) + GDP + H(+). It catalyses the reaction a globoside GalGb4Cer (d18:1(4E)) + GDP-beta-L-fucose = a globoside Globo-H (d18:1(4E)) + GDP + H(+). The catalysed reaction is a neolactoside nLc4Cer + GDP-beta-L-fucose = a neolactoside IV(2)-alpha-Fuc-nLc4Cer + GDP + H(+). It carries out the reaction a neolactoside nLc4Cer(d18:1(4E)) + GDP-beta-L-fucose = a neolactoside IV(2)-alpha-Fuc-nLc4Cer(d18:1(4E)) + GDP + H(+). The enzyme catalyses a ganglioside GM1 + GDP-beta-L-fucose = a ganglioside Fuc-GM1 + GDP + H(+). It catalyses the reaction a ganglioside GA1 + GDP-beta-L-fucose = a ganglioside Fuc-GA1 + GDP + H(+). The catalysed reaction is Lc4Cer + GDP-beta-L-fucose = alpha-L-fucosyl-(1-&gt;2)-beta-D-galactosyl-(1-&gt;3)-N-acetyl-beta-D-glucosaminyl-(1-&gt;3)-beta-D-galactosyl-(1-&gt;4)-beta-D-glucosyl-(1&lt;-&gt;1')-ceramide + GDP + H(+). It carries out the reaction a beta-D-Gal-(1-&gt;3)-beta-D-GlcNAc-(1-&gt;3)-beta-D-Gal-(1-&gt;4)-beta-D-Glc-(1&lt;-&gt;1')-Cer(d18:1(4E)) + GDP-beta-L-fucose = alpha-L-fucosyl-(1-&gt;2)- beta-D-galactosyl-(1-&gt;3)-N-acetyl-beta-D-glucosaminyl-(1-&gt;3)-beta-D-galactosyl-(1-&gt;4)-beta-D-glucosyl-(1&lt;-&gt;1')-N-acylsphing-4-enine + GDP + H(+). The enzyme catalyses a ganglioside GD1b + GDP-beta-L-fucose = a ganglioside Fuc-GD1b + GDP + H(+). It catalyses the reaction a lactoside III(4)-a-Fuc-Lc4Cer + GDP-beta-L-fucose = a lactoside IV(2),III(4)-a-[Fuc]2-Lc4Cer + GDP + H(+). The catalysed reaction is beta-D-galactosyl-(1-&gt;3)-N-acetyl-D-galactosamine + GDP-beta-L-fucose = alpha-L-fucosyl-(1-&gt;2)-beta-D-galactosyl-(1-&gt;3)-N-acetyl-D-galactosamine + GDP + H(+). It functions in the pathway protein modification; protein glycosylation. In terms of biological role, catalyzes the transfer of L-fucose, from a guanosine diphosphate-beta-L-fucose, to the terminal galactose on both O- and N-linked glycans chains of cell surface glycoproteins and glycolipids and the resulting epitope regulates several processes such as cell-cell interaction including host-microbe interaction, cell surface expression and cell proliferation. Preferentially fucosylates gangliosides GA1 and GM1 in the antrum, cecum and colon and in the female reproductive organs. Fucosylated host glycoproteins or glycolipids mediate interaction with intestinal microbiota influencing its composition. Creates a soluble precursor oligosaccharide FuC-alpha ((1,2)Galbeta-) called the H antigen which is an essential substrate for the final step in the soluble ABO blood group antigen synthesis pathway. The protein is Galactoside alpha-(1,2)-fucosyltransferase 2 of Rattus norvegicus (Rat).